A 387-amino-acid chain; its full sequence is Natterin-4 (387 aa).

The signal sequence occupies residues 1 to 18; the sequence is MKLLVLLVTLLVLSWTSA. Positions 19–46 are excised as a propeptide; the sequence is EDVGDQEILQQHNEDNNHKSELGEAAPQ. Residues 31 to 40 show a composition bias toward basic and acidic residues; that stretch reads NEDNNHKSEL. Positions 31–57 are disordered; that stretch reads NEDNNHKSELGEAAPQRTDNETSQLGQ.

Belongs to the natterin family. Contains 4 disulfide bonds. As to expression, expressed by the venom gland.

The protein resides in the secreted. Its activity is regulated as follows. Inhibited by tissue-kallikrein inhibitor TKI and trasylol. Plasma kallikrein inhibitor PKSI527 and classical inhibitors of serine-, metallo-, thiol- or aspartate-peptidases evokes a minor inhibition of the peptide digestion. Its function is as follows. Shows nociceptive, edema-inducing and kininogenase activity with release of kallidin from low molecular weight kininogen. The cleavage occurs at Met-Lys bonds. The chain is Natterin-4 from Thalassophryne nattereri (Copper Joe toadfish).